The following is a 212-amino-acid chain: 2',3'-cyclic-nucleotide 3'-phosphodiesterase (212 aa).

The Proton donor/acceptor role is filled by H51. T53 serves as a coordination point for substrate. Residue H146 is the Proton donor/acceptor of the active site. Residues S148 and Y151 each coordinate substrate.

This sequence belongs to the 2H phosphoesterase superfamily. CPD1 family.

The protein resides in the golgi apparatus. The enzyme catalyses a nucleoside 2',3'-cyclic phosphate + H2O = a nucleoside 2'-phosphate + H(+). Involved in the metabolism of ADP-ribose 1',2'-cyclic phosphate which is produced as a consequence of tRNA splicing. The sequence is that of 2',3'-cyclic-nucleotide 3'-phosphodiesterase (cpd-7) from Neurospora crassa (strain ATCC 24698 / 74-OR23-1A / CBS 708.71 / DSM 1257 / FGSC 987).